The chain runs to 20 residues: Toxin b subunit beta (20 aa).

In terms of assembly, toxin b is a heterodimer composed of toxin alpha and toxin beta. As to expression, expressed by the venom gland.

The protein localises to the secreted. Functionally, binds to sodium channels (Nav) and affects the channel activation process. This chain is Toxin b subunit beta, found in Androctonus crassicauda (Arabian fat-tailed scorpion).